A 413-amino-acid chain; its full sequence is S-adenosylmethionine synthase (413 aa).

H15 serves as a coordination point for ATP. Position 17 (D17) interacts with Mg(2+). Residue E43 participates in K(+) binding. L-methionine-binding residues include E56 and Q100. Residues 100–110 (QSPDISQGVND) form a flexible loop region. ATP is bound by residues 171–173 (DGK), 248–249 (KF), D257, 263–264 (RK), A280, and K284. An L-methionine-binding site is contributed by D257. K288 serves as a coordination point for L-methionine.

The protein belongs to the AdoMet synthase family. In terms of assembly, homotetramer; dimer of dimers. Mg(2+) is required as a cofactor. The cofactor is K(+).

Its subcellular location is the cytoplasm. The catalysed reaction is L-methionine + ATP + H2O = S-adenosyl-L-methionine + phosphate + diphosphate. It functions in the pathway amino-acid biosynthesis; S-adenosyl-L-methionine biosynthesis; S-adenosyl-L-methionine from L-methionine: step 1/1. In terms of biological role, catalyzes the formation of S-adenosylmethionine (AdoMet) from methionine and ATP. The overall synthetic reaction is composed of two sequential steps, AdoMet formation and the subsequent tripolyphosphate hydrolysis which occurs prior to release of AdoMet from the enzyme. This is S-adenosylmethionine synthase from Prochlorococcus marinus (strain MIT 9301).